A 524-amino-acid chain; its full sequence is Light-independent protochlorophyllide reductase subunit B (524 aa).

Asp36 contacts [4Fe-4S] cluster. Catalysis depends on Asp290, which acts as the Proton donor. 425–426 (GL) is a binding site for substrate.

The protein belongs to the ChlB/BchB/BchZ family. As to quaternary structure, protochlorophyllide reductase is composed of three subunits; ChlL, ChlN and ChlB. Forms a heterotetramer of two ChlB and two ChlN subunits. The cofactor is [4Fe-4S] cluster.

The catalysed reaction is chlorophyllide a + oxidized 2[4Fe-4S]-[ferredoxin] + 2 ADP + 2 phosphate = protochlorophyllide a + reduced 2[4Fe-4S]-[ferredoxin] + 2 ATP + 2 H2O. The protein operates within porphyrin-containing compound metabolism; chlorophyll biosynthesis (light-independent). Component of the dark-operative protochlorophyllide reductase (DPOR) that uses Mg-ATP and reduced ferredoxin to reduce ring D of protochlorophyllide (Pchlide) to form chlorophyllide a (Chlide). This reaction is light-independent. The NB-protein (ChlN-ChlB) is the catalytic component of the complex. The chain is Light-independent protochlorophyllide reductase subunit B from Parasynechococcus marenigrum (strain WH8102).